The following is a 457-amino-acid chain: tRNA-2-methylthio-N(6)-dimethylallyladenosine synthase (457 aa).

One can recognise an MTTase N-terminal domain in the interval 3 to 120 (KKVYVKTFGC…LPQMIDARRA (118 aa)). Positions 12, 49, 83, 157, 161, and 164 each coordinate [4Fe-4S] cluster. Positions 143-377 (RVEGPSAFVS…QATIEENVAR (235 aa)) constitute a Radical SAM core domain. A TRAM domain is found at 380–447 (QSMVGKVERI…PHSLRGELLL (68 aa)).

Belongs to the methylthiotransferase family. MiaB subfamily. As to quaternary structure, monomer. [4Fe-4S] cluster is required as a cofactor.

Its subcellular location is the cytoplasm. It carries out the reaction N(6)-dimethylallyladenosine(37) in tRNA + (sulfur carrier)-SH + AH2 + 2 S-adenosyl-L-methionine = 2-methylsulfanyl-N(6)-dimethylallyladenosine(37) in tRNA + (sulfur carrier)-H + 5'-deoxyadenosine + L-methionine + A + S-adenosyl-L-homocysteine + 2 H(+). In terms of biological role, catalyzes the methylthiolation of N6-(dimethylallyl)adenosine (i(6)A), leading to the formation of 2-methylthio-N6-(dimethylallyl)adenosine (ms(2)i(6)A) at position 37 in tRNAs that read codons beginning with uridine. This is tRNA-2-methylthio-N(6)-dimethylallyladenosine synthase from Burkholderia vietnamiensis (strain G4 / LMG 22486) (Burkholderia cepacia (strain R1808)).